The primary structure comprises 384 residues: Helix-loop-helix protein delilah (384 aa).

Disordered regions lie at residues 1–101 and 187–227; these read MKSN…TANA and EEAE…KIVP. Over residues 75–86 the composition is skewed to basic residues; it reads KSRKNAPTKSKT. Positions 94–153 constitute a bHLH domain; the sequence is YRRKTANARERTRMREINTAFETLRHCVPEAIKGEDAANTNEKLTKITTLRLAMKYITML. A compositionally biased stretch (low complexity) spans 209 to 224; sequence KKSSAASKRQSQKQAK.

As to quaternary structure, efficient DNA binding requires dimerization with another bHLH protein, possibly with da. Expressed almost exclusively in the attachments sites of the somatic muscles to tendon cells in the epidermis.

Its subcellular location is the nucleus. In terms of biological role, probably plays an important role in the differentiation of epidermal cells into the tendon cells that form the attachment sites for all muscles. The chain is Helix-loop-helix protein delilah (tx) from Drosophila melanogaster (Fruit fly).